The chain runs to 170 residues: Ribosome maturation factor RimP (170 aa).

It belongs to the RimP family.

The protein resides in the cytoplasm. Required for maturation of 30S ribosomal subunits. This chain is Ribosome maturation factor RimP, found in Chlorobaculum parvum (strain DSM 263 / NCIMB 8327) (Chlorobium vibrioforme subsp. thiosulfatophilum).